Here is a 352-residue protein sequence, read N- to C-terminus: MTAALHIGHLSKSFQNTPVLNDISLSLDPGEILFIVGASGCGKTTLLRCLAGFEQPDFGEISLSGRTIFSKNTNLPVRERRLGYVVQEGVLFPHLTVYRNTAYGLGNGKGKTAQERQRIEAMLELTGISELAGRYPHELSGGQQQRVALARALAPDPELILLDEPFSALDEQLRRQIREDMIAALRANGKSAVFVSHDREEALQYADRIAVMKQGRILQTASPHELYRQPADLDAALFIGEGIVFPAALNADGTADCGLGRLPVQSGAPAGTRGTLLIRPEQFSLHPHSAPTASIHAVVLKTTPKARHTEISLRVGQTVLTLNLPSAPTLSDGISAVLHLDGPALFFPGNTL.

The ABC transporter domain occupies 5–239 (LHIGHLSKSF…PADLDAALFI (235 aa)). 37-44 (GASGCGKT) serves as a coordination point for ATP.

It belongs to the ABC transporter superfamily. Fe(3+) ion importer (TC 3.A.1.10) family. The complex is composed of two ATP-binding proteins (FbpC), two transmembrane proteins (FbpB) and a solute-binding protein (FbpA).

Its subcellular location is the cell inner membrane. The catalysed reaction is Fe(3+)(out) + ATP + H2O = Fe(3+)(in) + ADP + phosphate + H(+). Functionally, part of the ABC transporter complex FbpABC involved in Fe(3+) ions import. Responsible for energy coupling to the transport system. The polypeptide is Fe(3+) ions import ATP-binding protein FbpC (Neisseria meningitidis serogroup A / serotype 4A (strain DSM 15465 / Z2491)).